The sequence spans 959 residues: General transcription factor II-I repeat domain-containing protein 1 (959 aa).

Residues K27 and K94 each participate in a glycyl lysine isopeptide (Lys-Gly) (interchain with G-Cter in SUMO2) cross-link. Residues 96-106 (PEAEHPKKVQR) are compositionally biased toward basic and acidic residues. The tract at residues 96–117 (PEAEHPKKVQRGEGGGRSLPRS) is disordered. A GTF2I-like 1 repeat occupies 119–213 (LEHGSDVYLL…LEDGGRDSKA (95 aa)). Residues K184, K212, K225, K238, K271, K294, K308, K337, K436, K439, and K443 each participate in a glycyl lysine isopeptide (Lys-Gly) (interchain with G-Cter in SUMO2) cross-link. The disordered stretch occupies residues 230–250 (CGLHGQAPKVPPQDLPPTATS). A GTF2I-like 2 repeat occupies 342-436 (IKETEDINTL…FDERIFTGNK (95 aa)). S448 is modified (phosphoserine). The interval 468–492 (NARSDKGSMSEDCGPGTSGELGGLR) is disordered. The stretch at 556-650 (DSHGDVIRPL…ELLTEGVKEP (95 aa)) is one GTF2I-like 3 repeat. Residues K567, K579, K588, K622, K638, and K648 each participate in a glycyl lysine isopeptide (Lys-Gly) (interchain with G-Cter in SUMO2) cross-link. S654 is subject to Phosphoserine. The segment at 654 to 679 (SQGTASSLGFSPPALPPERDSGDPLV) is disordered. Residues P669, P670, D680, and K684 each participate in a glycyl lysine isopeptide (Lys-Gly) (interchain with G-Cter in SUMO2) cross-link. Q686 is modified (phosphoserine). 2 GTF2I-like repeats span residues 696 to 790 (LSRI…KPDE) and 793 to 887 (ANRL…ICND). Glycyl lysine isopeptide (Lys-Gly) (interchain with G-Cter in SUMO2) cross-links involve residues I701, K724, K732, K772, K774, K787, K829, K889, and K893. Residues 892-927 (AKDSSIPKRKRKRVSEGNSVSSSSSSSSSSSSNPDS) form a disordered region. Positions 898–905 (PKRKRKRV) match the Nuclear localization signal motif. Low complexity predominate over residues 910 to 923 (SVSSSSSSSSSSSS).

It belongs to the TFII-I family. In terms of assembly, interacts with the retinoblastoma protein (RB1) via its C-terminus. Highly expressed in adult skeletal muscle, heart, fibroblast, bone and fetal tissues. Expressed at lower levels in all other tissues tested.

It localises to the nucleus. In terms of biological role, may be a transcription regulator involved in cell-cycle progression and skeletal muscle differentiation. May repress GTF2I transcriptional functions, by preventing its nuclear residency, or by inhibiting its transcriptional activation. May contribute to slow-twitch fiber type specificity during myogenesis and in regenerating muscles. Binds troponin I slow-muscle fiber enhancer (USE B1). Binds specifically and with high affinity to the EFG sequences derived from the early enhancer of HOXC8. This Homo sapiens (Human) protein is General transcription factor II-I repeat domain-containing protein 1 (GTF2IRD1).